The chain runs to 378 residues: Ribosomal RNA large subunit methyltransferase G (378 aa).

This sequence belongs to the methyltransferase superfamily. RlmG family.

Its subcellular location is the cytoplasm. The enzyme catalyses guanosine(1835) in 23S rRNA + S-adenosyl-L-methionine = N(2)-methylguanosine(1835) in 23S rRNA + S-adenosyl-L-homocysteine + H(+). In terms of biological role, specifically methylates the guanine in position 1835 (m2G1835) of 23S rRNA. This is Ribosomal RNA large subunit methyltransferase G from Shewanella baltica (strain OS155 / ATCC BAA-1091).